A 108-amino-acid chain; its full sequence is Integration host factor subunit alpha (108 aa).

This sequence belongs to the bacterial histone-like protein family. As to quaternary structure, heterodimer of an alpha and a beta chain.

Functionally, this protein is one of the two subunits of integration host factor, a specific DNA-binding protein that functions in genetic recombination as well as in transcriptional and translational control. The chain is Integration host factor subunit alpha from Methylorubrum populi (strain ATCC BAA-705 / NCIMB 13946 / BJ001) (Methylobacterium populi).